We begin with the raw amino-acid sequence, 166 residues long: MSHKVSKKLDEEQINELREIFRSFDRNKDGSLTQLELGSLLRALGVKPSPDQFETLIDKADTKSNGLVEFPEFVALVSPELLSPAKRTTPYTEEQLLRLFRIFDTDGNGFITAAELAHSMAKLGHALTVAELTGMIKEADSDGDGRINFQEFAKAINSAAFDDIWG.

4 EF-hand domains span residues 12-47, 48-83, 91-126, and 127-162; these read EQIN…LGVK, PSPD…ELLS, YTEE…LGHA, and LTVA…AAFD. Residues Asp25, Asn27, Asp29, Ser31, and Glu36 each contribute to the Ca(2+) site. Residues Asp104, Asp106, Asn108, Glu115, Asp140, Asp142, Asp144, Arg146, and Glu151 each coordinate Ca(2+).

In terms of biological role, potential calcium sensor. The polypeptide is Probable calcium-binding protein CML17 (CML17) (Arabidopsis thaliana (Mouse-ear cress)).